The sequence spans 122 residues: Small ribosomal subunit protein uS13 (122 aa).

The tract at residues 99-122 is disordered; sequence RGQRTHTNARTRKGPAKAIAGKKK.

It belongs to the universal ribosomal protein uS13 family. In terms of assembly, part of the 30S ribosomal subunit. Forms a loose heterodimer with protein S19. Forms two bridges to the 50S subunit in the 70S ribosome.

In terms of biological role, located at the top of the head of the 30S subunit, it contacts several helices of the 16S rRNA. In the 70S ribosome it contacts the 23S rRNA (bridge B1a) and protein L5 of the 50S subunit (bridge B1b), connecting the 2 subunits; these bridges are implicated in subunit movement. Contacts the tRNAs in the A and P-sites. This is Small ribosomal subunit protein uS13 from Cereibacter sphaeroides (strain ATCC 17025 / ATH 2.4.3) (Rhodobacter sphaeroides).